Consider the following 153-residue polypeptide: uncharacterized protein (153 aa).

An N-terminal signal peptide occupies residues 1 to 19; that stretch reads MRKYIPLVLFIFSWPVLCA. Active-site residues include Arg46, Glu54, and Arg88.

Belongs to the thermonuclease family.

This is an uncharacterized protein from Escherichia coli.